Reading from the N-terminus, the 216-residue chain is Uracil phosphoribosyltransferase (216 aa).

5-phospho-alpha-D-ribose 1-diphosphate-binding positions include R85, R110, and 135-143 (DPMVATGYS). Uracil is bound by residues I200 and 205-207 (GDA). Residue D206 participates in 5-phospho-alpha-D-ribose 1-diphosphate binding.

This sequence belongs to the UPRTase family. Requires Mg(2+) as cofactor.

The catalysed reaction is UMP + diphosphate = 5-phospho-alpha-D-ribose 1-diphosphate + uracil. It functions in the pathway pyrimidine metabolism; UMP biosynthesis via salvage pathway; UMP from uracil: step 1/1. Its activity is regulated as follows. Allosterically activated by GTP. Catalyzes the conversion of uracil and 5-phospho-alpha-D-ribose 1-diphosphate (PRPP) to UMP and diphosphate. This is Uracil phosphoribosyltransferase from Burkholderia vietnamiensis (strain G4 / LMG 22486) (Burkholderia cepacia (strain R1808)).